Here is a 343-residue protein sequence, read N- to C-terminus: Protein RecA (343 aa).

66–73 (GPESSGKT) contributes to the ATP binding site.

The protein belongs to the RecA family.

It is found in the cytoplasm. Its function is as follows. Can catalyze the hydrolysis of ATP in the presence of single-stranded DNA, the ATP-dependent uptake of single-stranded DNA by duplex DNA, and the ATP-dependent hybridization of homologous single-stranded DNAs. It interacts with LexA causing its activation and leading to its autocatalytic cleavage. In Nitrosomonas europaea (strain ATCC 19718 / CIP 103999 / KCTC 2705 / NBRC 14298), this protein is Protein RecA.